We begin with the raw amino-acid sequence, 132 residues long: MNMRPDTCSVLVLLLMLRRNNGDSVTQTEGLVTLTEGLPVMLNCTYQSTYSPFLFWYVQHLNEAPKLLFKSFTDNKRPEHQGFHATLHKSSSSFHLQKSSAQLSDSALYYCALSNAGAKLTFGGGTRLTVRP.

An N-terminal signal peptide occupies residues 1–22 (MNMRPDTCSVLVLLLMLRRNNG). Residues 23–114 (DSVTQTEGLV…DSALYYCALS (92 aa)) form a v segment region. Residue Asn-43 is glycosylated (N-linked (GlcNAc...) asparagine). Cys-44 and Cys-111 are oxidised to a cystine. The segment at 115 to 132 (NAGAKLTFGGGTRLTVRP) is j segment.

The sequence is that of T-cell receptor alpha chain V region CTL-F3 from Mus musculus (Mouse).